The chain runs to 316 residues: Malate dehydrogenase (316 aa).

Residues 12–17 (GAGNIG) and aspartate 36 each bind NAD(+). Substrate contacts are provided by arginine 85 and arginine 91. Residues asparagine 98 and 121–123 (VTN) contribute to the NAD(+) site. Substrate contacts are provided by asparagine 123 and arginine 154. Residue histidine 178 is the Proton acceptor of the active site.

The protein belongs to the LDH/MDH superfamily. MDH type 3 family.

The enzyme catalyses (S)-malate + NAD(+) = oxaloacetate + NADH + H(+). Functionally, catalyzes the reversible oxidation of malate to oxaloacetate. The protein is Malate dehydrogenase of Wolbachia pipientis wMel.